Here is a 275-residue protein sequence, read N- to C-terminus: Large ribosomal subunit protein uL2 (275 aa).

Residues 210–275 form a disordered region; that stretch reads GRNRHRGIRP…DKLIISRKKK (66 aa). Residues 257-275 show a composition bias toward basic residues; the sequence is FKTRKKKASDKLIISRKKK.

It belongs to the universal ribosomal protein uL2 family. As to quaternary structure, part of the 50S ribosomal subunit. Forms a bridge to the 30S subunit in the 70S ribosome.

One of the primary rRNA binding proteins. Required for association of the 30S and 50S subunits to form the 70S ribosome, for tRNA binding and peptide bond formation. It has been suggested to have peptidyltransferase activity; this is somewhat controversial. Makes several contacts with the 16S rRNA in the 70S ribosome. The polypeptide is Large ribosomal subunit protein uL2 (Helicobacter hepaticus (strain ATCC 51449 / 3B1)).